The following is a 251-amino-acid chain: 3-deoxy-manno-octulosonate cytidylyltransferase (251 aa).

It belongs to the KdsB family.

Its subcellular location is the cytoplasm. It carries out the reaction 3-deoxy-alpha-D-manno-oct-2-ulosonate + CTP = CMP-3-deoxy-beta-D-manno-octulosonate + diphosphate. The protein operates within nucleotide-sugar biosynthesis; CMP-3-deoxy-D-manno-octulosonate biosynthesis; CMP-3-deoxy-D-manno-octulosonate from 3-deoxy-D-manno-octulosonate and CTP: step 1/1. It functions in the pathway bacterial outer membrane biogenesis; lipopolysaccharide biosynthesis. Its function is as follows. Activates KDO (a required 8-carbon sugar) for incorporation into bacterial lipopolysaccharide in Gram-negative bacteria. The protein is 3-deoxy-manno-octulosonate cytidylyltransferase of Parabacteroides distasonis (strain ATCC 8503 / DSM 20701 / CIP 104284 / JCM 5825 / NCTC 11152).